The sequence spans 1101 residues: Rho guanine nucleotide exchange factor gef2 (1101 aa).

The interval 203 to 222 is disordered; sequence EDSRKKTSSPSPSFASSKDA. The segment covering 210–219 has biased composition (low complexity); the sequence is SSPSPSFASS. Residues 230–428 enclose the DH domain; sequence KKKSLLIEMM…KNIAEMPTVD (199 aa). Ser-736 and Ser-977 each carry phosphoserine.

It localises to the cytoplasm. The protein resides in the cytoskeleton. The protein localises to the microtubule organizing center. It is found in the spindle pole body. Functionally, has a role in the control of cell polarity and cytokinesis. Involved in bipolar growth and septum formation. The chain is Rho guanine nucleotide exchange factor gef2 (gef2) from Schizosaccharomyces pombe (strain 972 / ATCC 24843) (Fission yeast).